Here is a 241-residue protein sequence, read N- to C-terminus: MMMALQIFIKILPIMFFGILLANLMCHLNILYKLQKYIKNKYFPIIAVFFVSSTSGSFLLKNLLKKGEISEENLLPIYFLGMFVFGIHIILFYAIPMATSLGWYVGGIYVLIKFLVTCNYLIISVLMLKKRKYNIDIEFKSKSEGLYGAIRDTFKQYFRVLTSFVPSVLIITYLIEHGLLDIVEDFAGSLLNALNLSPTILVIVLTGLATISGAIGIASGLLDENILSPNEVLFSLFLAGF.

The next 6 helical transmembrane spans lie at 1-21 (MMMA…GILL), 43-63 (FPII…LKNL), 75-95 (LPIY…FYAI), 108-128 (IYVL…VLML), 160-180 (VLTS…HGLL), and 200-220 (ILVI…IASG).

It to M.jannaschii MJ0871, MJ0880 and MJ1556.

It localises to the cell membrane. This is an uncharacterized protein from Methanocaldococcus jannaschii (strain ATCC 43067 / DSM 2661 / JAL-1 / JCM 10045 / NBRC 100440) (Methanococcus jannaschii).